A 450-amino-acid polypeptide reads, in one-letter code: Flavin-containing monooxygenase FMO GS-OX-like 5 (450 aa).

17-22 (GAGPAG) contributes to the FAD binding site. 215–220 (GNSSSA) provides a ligand contact to NADP(+).

Belongs to the FMO family. FAD serves as cofactor.

In terms of biological role, catalyzes the conversion of methylthioalkyl glucosinolates of any chain length into methylsulfinylalkyl glucosinolates. The chain is Flavin-containing monooxygenase FMO GS-OX-like 5 from Arabidopsis thaliana (Mouse-ear cress).